The following is a 202-amino-acid chain: Transmembrane 4 L6 family member 4 (202 aa).

Over 1–9 (MCTGGCARC) the chain is Cytoplasmic. A helical membrane pass occupies residues 10–30 (LGGTLIPLAVFGLLANILLFF). Over 31 to 48 (PGGKVVNDKSHLSDEVWY) the chain is Extracellular. The chain crosses the membrane as a helical span at residues 49–69 (FGGILGSGVLMIFPALVFLGL). Topologically, residues 70–93 (QNNDCCGCCGNEGCGKRFAMFTST) are cytoplasmic. Residues 94 to 114 (LFAVIGFLGAGYSFIVSAVSI) form a helical membrane-spanning segment. At 115–158 (NKGPKCFMANGTWGYPFHDGDYLKDQALWSECEEPRDVVPWNLT) the chain is on the extracellular side. Asn-156 carries an N-linked (GlcNAc...) asparagine glycan. Residues 159–179 (LFSILLVIGGIQMVLCAIQVI) form a helical membrane-spanning segment. Residues 180-202 (NGLLGTLCGDCQCCGCCGGDGPV) lie on the Cytoplasmic side of the membrane.

The protein belongs to the L6 tetraspanin family.

The protein resides in the membrane. Regulates the adhesive and proliferative status of intestinal epithelial cells. Can mediate density-dependent cell proliferation. The protein is Transmembrane 4 L6 family member 4 (Tm4sf4) of Mus musculus (Mouse).